An 831-amino-acid polypeptide reads, in one-letter code: Cysteine--tRNA ligase, cytoplasmic (831 aa).

N-acetylalanine is present on Ala2. At Ser102 the chain carries Phosphoserine. Residue Cys138 coordinates Zn(2+). Gly139 serves as a coordination point for L-cysteine. Residues 140–150 carry the 'HIGH' region motif; sequence PTVYDASHMGH. Thr179 contributes to the L-cysteine binding site. The short motif at 184-187 is the 'KIIK' region element; that stretch reads KIIR. Phosphoserine is present on residues Ser388 and Ser390. Residues Cys431, His456, and Glu460 each contribute to the Zn(2+) site. His456 provides a ligand contact to L-cysteine. Positions 489–493 match the 'KMSKS' region motif; sequence KMSKS. Lys492 is an ATP binding site. Over residues 736–762 the composition is skewed to basic and acidic residues; sequence GKKRAEEEKRRKKEEAARKKQEQEAAK. A disordered region spans residues 736–766; that stretch reads GKKRAEEEKRRKKEEAARKKQEQEAAKLAKM. At Ser829 the chain carries Phosphoserine.

It belongs to the class-I aminoacyl-tRNA synthetase family. As to quaternary structure, homodimer. Requires Zn(2+) as cofactor.

It localises to the cytoplasm. The enzyme catalyses tRNA(Cys) + L-cysteine + ATP = L-cysteinyl-tRNA(Cys) + AMP + diphosphate. Functionally, catalyzes the ATP-dependent ligation of cysteine to tRNA(Cys). The sequence is that of Cysteine--tRNA ligase, cytoplasmic (Cars1) from Mus musculus (Mouse).